The following is a 432-amino-acid chain: Glutamyl-tRNA reductase (432 aa).

Substrate is bound by residues 55-58 (TCNR), serine 114, 119-121 (ETQ), and glutamine 125. Cysteine 56 (nucleophile) is an active-site residue. 194-199 (GAGEMI) serves as a coordination point for NADP(+).

Belongs to the glutamyl-tRNA reductase family. Homodimer.

It catalyses the reaction (S)-4-amino-5-oxopentanoate + tRNA(Glu) + NADP(+) = L-glutamyl-tRNA(Glu) + NADPH + H(+). It participates in porphyrin-containing compound metabolism; protoporphyrin-IX biosynthesis; 5-aminolevulinate from L-glutamyl-tRNA(Glu): step 1/2. Catalyzes the NADPH-dependent reduction of glutamyl-tRNA(Glu) to glutamate 1-semialdehyde (GSA). This is Glutamyl-tRNA reductase from Burkholderia ambifaria (strain ATCC BAA-244 / DSM 16087 / CCUG 44356 / LMG 19182 / AMMD) (Burkholderia cepacia (strain AMMD)).